Here is a 391-residue protein sequence, read N- to C-terminus: Casein kinase II subunit alpha (391 aa).

An interaction with beta subunit region spans residues 36–41 (QDDYQL). Residues 39–324 (YQLVRKLGRG…AREAMEHPYF (286 aa)) form the Protein kinase domain. Residues 45–53 (LGRGKYSEV) and Lys68 contribute to the ATP site. Asp156 functions as the Proton acceptor in the catalytic mechanism. Thr344 and Thr360 each carry phosphothreonine; by CDK1. Ser362 and Ser370 each carry phosphoserine; by CDK1.

The protein belongs to the protein kinase superfamily. Ser/Thr protein kinase family. CK2 subfamily. As to quaternary structure, heterotetramer composed of two catalytic subunits (alpha chain and/or alpha' chain) and two regulatory subunits (beta chains). The tetramer can exist as a combination of 2 alpha/2 beta, 2 alpha'/2 beta or 1 alpha/1 alpha'/2 beta subunits. Also part of a CK2-SPT16-SSRP1 complex composed of SSRP1, SUPT16H, CSNK2A1, CSNK2A2 and CSNK2B, which forms following UV irradiation. Interacts with RNPS1. Interacts with SNAI1. Interacts with PML. Interacts with CCAR2. Interacts with HIRIP3. In terms of processing, phosphorylated at Thr-344, Thr-360, Ser-362 and Ser-370 by CDK1 in prophase and metaphase and dephosphorylated during anaphase. Phosphorylation does not directly affect casein kinase 2 activity, but may contribute to its regulation by forming binding sites for interacting proteins and/or targeting it to different compartments.

It is found in the nucleus. It catalyses the reaction L-seryl-[protein] + ATP = O-phospho-L-seryl-[protein] + ADP + H(+). The enzyme catalyses L-threonyl-[protein] + ATP = O-phospho-L-threonyl-[protein] + ADP + H(+). With respect to regulation, constitutively active protein kinase whose activity is not directly affected by phosphorylation. Seems to be regulated by level of expression and localization. Functionally, catalytic subunit of a constitutively active serine/threonine-protein kinase complex that phosphorylates a large number of substrates containing acidic residues C-terminal to the phosphorylated serine or threonine. Regulates numerous cellular processes, such as cell cycle progression, apoptosis and transcription, as well as viral infection. May act as a regulatory node which integrates and coordinates numerous signals leading to an appropriate cellular response. During mitosis, functions as a component of the p53/TP53-dependent spindle assembly checkpoint (SAC) that maintains cyclin-B-CDK1 activity and G2 arrest in response to spindle damage. Also required for p53/TP53-mediated apoptosis, phosphorylating 'Ser-392' of p53/TP53 following UV irradiation. Phosphorylates a number of DNA repair proteins in response to DNA damage, such as MDC1, MRE11, RAD9A, RAD51 and HTATSF1, promoting their recruitment to DNA damage sites. Can also negatively regulate apoptosis. Phosphorylates the caspases CASP9 and CASP2 and the apoptotic regulator NOL3. Phosphorylation protects CASP9 from cleavage and activation by CASP8, and inhibits the dimerization of CASP2 and activation of CASP8. Phosphorylates YY1, protecting YY1 from cleavage by CASP7 during apoptosis. Regulates transcription by direct phosphorylation of RNA polymerases I, II, III and IV. Also phosphorylates and regulates numerous transcription factors including NF-kappa-B, STAT1, CREB1, IRF1, IRF2, ATF1, ATF4, SRF, MAX, JUN, FOS, MYC and MYB. Phosphorylates Hsp90 and its co-chaperones FKBP4 and CDC37, which is essential for chaperone function. Mediates sequential phosphorylation of FNIP1, promoting its gradual interaction with Hsp90, leading to activate both kinase and non-kinase client proteins of Hsp90. Regulates Wnt signaling by phosphorylating CTNNB1 and the transcription factor LEF1. Acts as an ectokinase that phosphorylates several extracellular proteins. Phosphorylates PML at 'Ser-565' and primes it for ubiquitin-mediated degradation. Plays an important role in the circadian clock function by phosphorylating BMAL1 at 'Ser-90' which is pivotal for its interaction with CLOCK and which controls CLOCK nuclear entry. Phosphorylates FMR1, promoting FMR1-dependent formation of a membraneless compartment. May phosphorylate histone H2A on 'Ser-1'. In Rattus norvegicus (Rat), this protein is Casein kinase II subunit alpha (Csnk2a1).